Reading from the N-terminus, the 462-residue chain is Putative endoglucanase type B (462 aa).

The signal sequence occupies residues M1 to A16. Residues C25–Q61 form the CBM1 domain. 2 disulfide bridges follow: C33-C50 and C44-C60. N-linked (GlcNAc...) asparagine glycosylation is present at N37. Positions S64–P100 are enriched in low complexity. A disordered region spans residues S64–A102. A linker region spans residues E66 to A99. The catalytic stretch occupies residues P100 to L462. Residue D190 is part of the active site. C191 and C250 form a disulfide bridge. N223 carries an N-linked (GlcNAc...) asparagine glycan. The active-site Proton donor is D236. N-linked (GlcNAc...) asparagine glycosylation is found at N272 and N317. Residues C383 and C430 are joined by a disulfide bond. D416 serves as the catalytic Nucleophile.

This sequence belongs to the glycosyl hydrolase 6 (cellulase B) family.

The enzyme catalyses Endohydrolysis of (1-&gt;4)-beta-D-glucosidic linkages in cellulose, lichenin and cereal beta-D-glucans.. The polypeptide is Putative endoglucanase type B (Fusarium oxysporum (Fusarium vascular wilt)).